The primary structure comprises 460 residues: NADH-ubiquinone oxidoreductase chain 4 (460 aa).

A run of 13 helical transmembrane segments spans residues 22–42, 61–81, 97–114, 118–140, 149–169, 196–216, 226–246, 259–279, 286–305, 309–331, 352–372, 395–415, and 437–457; these read WLWPTTLLHSLLIALASLSWL, PLSTPLLILSCWLLPLMILAS, YISLLTSLQFFLILAFSA, IMFYVMFEVTLIPTLILITRWGN, TYFLFYTLAGSLPLLVALLLL, IWWTGCILAFLVKMPLYGVHL, PIAGSMILAAVLLKLGGYGMM, LSYPFIILALWGVIMTGSICM, SLIAYSSVSHMGLVVGGILI, WGFTGALILMIAHGLTSSALFCL, MALPLMTAWWFIASLANLALP, IALTGLGMLITAGYSLYMFLM, and LLIALHLLPLLLLILKPELIW.

Belongs to the complex I subunit 4 family.

The protein localises to the mitochondrion membrane. It catalyses the reaction a ubiquinone + NADH + 5 H(+)(in) = a ubiquinol + NAD(+) + 4 H(+)(out). In terms of biological role, core subunit of the mitochondrial membrane respiratory chain NADH dehydrogenase (Complex I) that is believed to belong to the minimal assembly required for catalysis. Complex I functions in the transfer of electrons from NADH to the respiratory chain. The immediate electron acceptor for the enzyme is believed to be ubiquinone. In Tetraodon nigroviridis (Spotted green pufferfish), this protein is NADH-ubiquinone oxidoreductase chain 4 (MT-ND4).